A 373-amino-acid polypeptide reads, in one-letter code: MAMTMIQLCYAGVTLFARATLVHGLSPRVFILYRQAFATIFIFPFLYLSRRKSKIAISSLDLKSFSLIFLVSLIGITINQNLYLEGLYLTSSSMGSAVGNIIPAITFLISFLAGYEKLNLRDIRGLAKIAGTILCVAGAISMTLLRGPKILNSESALPIAKSVLGHLKDQNTWLIGCLFLFSSTLCWSFWLILQVPISAYYPDNLSLSAWMCLFGTIQCAVVTFFLEKDPNAWILHSYSEFATCLYAGIGASALSFTVQAWAIAKRGPVFSALFNPLCTVIVTILAALFFHEEIYTGSLIGGLGVILGLYTVLWGKAKDVMMNQDQRDNDQKSEVKIHIEDSSNTTICNKDLKNPLLSKHKSTEEIQTHQQLY.

A run of 10 helical transmembrane segments spans residues Ala2–Val22, Val29–Ser49, Ile55–Gly75, Met94–Gly114, Gly125–Leu145, Trp173–Leu193, Leu205–Phe225, Cys244–Ala264, Phe270–Phe290, and Ile294–Trp314. EamA domains are found at residues Cys9–Cys135 and Cys186–Leu313.

It belongs to the drug/metabolite transporter (DMT) superfamily. Plant drug/metabolite exporter (P-DME) (TC 2.A.7.4) family.

The protein localises to the membrane. This Arabidopsis thaliana (Mouse-ear cress) protein is WAT1-related protein At4g30420.